The sequence spans 594 residues: DNA mismatch repair protein MutL (594 aa).

The protein belongs to the DNA mismatch repair MutL/HexB family.

Its function is as follows. This protein is involved in the repair of mismatches in DNA. It is required for dam-dependent methyl-directed DNA mismatch repair. May act as a 'molecular matchmaker', a protein that promotes the formation of a stable complex between two or more DNA-binding proteins in an ATP-dependent manner without itself being part of a final effector complex. This chain is DNA mismatch repair protein MutL, found in Tolumonas auensis (strain DSM 9187 / NBRC 110442 / TA 4).